The primary structure comprises 68 residues: Large ribosomal subunit protein bL32 (68 aa).

The segment at 1–21 is disordered; that stretch reads MAVQQNKVSKSRRNNRRAHDS.

The protein belongs to the bacterial ribosomal protein bL32 family.

In Roseobacter denitrificans (strain ATCC 33942 / OCh 114) (Erythrobacter sp. (strain OCh 114)), this protein is Large ribosomal subunit protein bL32.